The primary structure comprises 336 residues: Ribosomal RNA large subunit methyltransferase F (336 aa).

The protein belongs to the methyltransferase superfamily. METTL16/RlmF family.

The protein localises to the cytoplasm. The catalysed reaction is adenosine(1618) in 23S rRNA + S-adenosyl-L-methionine = N(6)-methyladenosine(1618) in 23S rRNA + S-adenosyl-L-homocysteine + H(+). Functionally, specifically methylates the adenine in position 1618 of 23S rRNA. The protein is Ribosomal RNA large subunit methyltransferase F of Yersinia pseudotuberculosis serotype I (strain IP32953).